A 756-amino-acid chain; its full sequence is MSDLVATSPSPSSAPRSATDFFSDPYDSHPLWFKPSLFLSPNFDSESYISELRTFVPFDTLRSELRSHLASLNRELVDLINRDYADFVNLSTKLVDIDAAVVRMRAPLLELREKITGFRGSVEAALFALRNGLQQRSDAAAAREVLELLLDTFHVVSKVEKLIKVLPSTPSDWQNEDANSMGRSSMNDENSTQQDGTTMRETQSMLLERIASEMNRLKFYMAHAQNLPFIENMEKRIQSASVLLDASLGHCFIDGLNNSDTSVLYNCLRAYAAIDNTNAAEEIFRTTIVAPFIQKIITHETTTNAAGTSEDELENDYKQIKHFIAKDCKMLLEISSTDKSGLHVFDFLANSILKEVLWAIQKVKPGAFSPGRPTEFLKNYKASLDFLAYLEGYCPSRSAVTKFRAEAICVEFMKQWNVGVYFSLRFQEIAGALDSALTSPSLVFIQDSDKESSLNLILRQSDTLLECLRSCWKEDVLVFSAADKFLRLTLQLLSRYSFWVSSALNNRKSNASPSPGCEWAVSATAEDFVYVIHDVNCLVSEVCGDYLGHISQYLSSSSTEVLDVVRISIEQGGVSLEKVLPLLTKTIIDVIVDKSVEDLRQLRGITATFRMTNKPLPVRHSPYVVGLLRPVKAFLEGDKARNYLTQKTKEELLHGSVSEITRRYYELAADVVSVARKTQSSLQKLRQNAQRRGGAASGVSDQNVSETDKMCMQLFLDIQEYGRNVSALGLKPADIPEYCSFWQCVAPADRQNSISV.

Positions 62-82 form a coiled coil; the sequence is RSELRSHLASLNRELVDLINR. The disordered stretch occupies residues 173–199; it reads WQNEDANSMGRSSMNDENSTQQDGTTM.

It belongs to the COG2 family. As to quaternary structure, homodimer. Component of the conserved oligomeric Golgi complex which is composed of eight different subunits and is required for normal Golgi morphology and localization. Binds to COG3 and COG4. Interacts with FPP3/VETH1 and FPP2/VETH2; this interaction promotes the association between cortical microtubules and EXO70A1. Binds to SEC15B, and, possibly, with EXO70A1, SEC3A and SEC10A.

It is found in the golgi apparatus membrane. Functionally, required for normal Golgi morphology and function. Ensures, when in complex with FPP3/VETH1 and FPP2/VETH2, the correct secondary cell wall (SCW) deposition pattern by recruiting exocyst components to cortical microtubules in xylem cells during secondary cell wall deposition. The sequence is that of Conserved oligomeric Golgi complex subunit 2 from Arabidopsis thaliana (Mouse-ear cress).